The chain runs to 486 residues: mRNA cap guanine-N(7) methyltransferase (486 aa).

The segment at 1–92 (MAGGADLDEP…ADRKAARERA (92 aa)) is disordered. Basic and acidic residues-rich tracts occupy residues 9–28 (EPPRQSDSTTDRKRPADSTH), 35–54 (VPRDRAGNKTYDISKLEPAR), and 82–92 (EADRKAARERA). The region spanning 135-486 (SRIKGLRSFN…FYVGFCFYKV (352 aa)) is the mRNA cap 0 methyltransferase domain. 144-145 (NN) contacts mRNA. S-adenosyl-L-methionine-binding positions include Lys148, Gly177, Asp201, Asp247, 281-283 (MFC), and Tyr286. The span at 333–351 (VEMKKKQAEAGDGSKKDDG) shows a compositional bias: basic and acidic residues. Residues 333-365 (VEMKKKQAEAGDGSKKDDGGDAEEGELDEPEVE) form a disordered region. A compositionally biased stretch (acidic residues) spans 352–363 (GDAEEGELDEPE).

This sequence belongs to the class I-like SAM-binding methyltransferase superfamily. mRNA cap 0 methyltransferase family.

It localises to the nucleus. The enzyme catalyses a 5'-end (5'-triphosphoguanosine)-ribonucleoside in mRNA + S-adenosyl-L-methionine = a 5'-end (N(7)-methyl 5'-triphosphoguanosine)-ribonucleoside in mRNA + S-adenosyl-L-homocysteine. Functionally, responsible for methylating the 5'-cap structure of mRNAs. The sequence is that of mRNA cap guanine-N(7) methyltransferase (ABD1) from Pyricularia oryzae (strain 70-15 / ATCC MYA-4617 / FGSC 8958) (Rice blast fungus).